The sequence spans 299 residues: Endonuclease G, mitochondrial (299 aa).

The N-terminal 48 residues, 1–48 (MQLLRAGLTLALGAGLGAAAESWWRQRADARATPGLLSRLPVLPVAAA), are a transit peptide targeting the mitochondrion. Threonine 130 carries the post-translational modification Phosphothreonine. The active-site Proton acceptor is histidine 143. Residue asparagine 174 participates in Mg(2+) binding. The tract at residues 288 to 298 (AGSLKAITAGS) is essential for deoxyribonuclease activity. The residue at position 290 (serine 290) is a Phosphoserine.

This sequence belongs to the DNA/RNA non-specific endonuclease family. In terms of assembly, homodimer; disulfide-linked. Homodimerization is essential for its activity. Interacts with YWHAG. The cofactor is Mg(2+). In terms of processing, GSK3-beta-mediated dual phosphorylations at Thr-130 and Ser-290 is necessary for its interaction with YWHAG and the induction of autophagy.

The protein resides in the mitochondrion. Functionally, endonuclease that preferentially catalyzes the cleavage of double-stranded 5-hydroxymethylcytosine (5hmC)-modified DNA. The 5hmC-modified nucleotide does not increase the binding affinity, but instead increases the efficiency of cutting and specifies the site of cleavage for the modified DNAs. Shows significantly higher affinity for four- stranded Holliday junction over duplex and single-stranded DNAs. Promotes conservative recombination when the DNA is 5hmC-modified. Promotes autophagy through the suppression of mTOR by its phosphorylation-mediated interaction with YWHAG and its endonuclease activity-mediated DNA damage response. GSK3-beta mediated phosphorylation of ENDOG enhances its interaction with YWHAG, leading to the release of TSC2 and PIK3C3 from YWHAG resulting in mTOR pathway suppression and autophagy initiation. Promotes cleavage of mtDNA in response to oxidative and nitrosative stress, in turn inducing compensatory mtDNA replication. This chain is Endonuclease G, mitochondrial (ENDOG), found in Bos taurus (Bovine).